The following is a 929-amino-acid chain: Urea transporter 2 (929 aa).

Residues 1-11 show a composition bias toward basic and acidic residues; it reads MSDHPLKEMSD. Residues 1-89 are disordered; sequence MSDHPLKEMS…KRRESELPRR (89 aa). The span at 31-42 shows a compositional bias: low complexity; the sequence is SELSSPTWPSSS. Positions 55–88 are enriched in basic and acidic residues; that stretch reads PEEKDLRSSDEDSHIVKIEKPNERSKRRESELPR. The next 9 membrane-spanning stretches (helical) occupy residues 133–155, 162–179, 184–204, 212–232, 241–261, 310–330, 349–371, 378–399, and 400–420; these read GAAQ…GLLI, IAGA…LALS, AIAS…VAVF, WWLL…SSAL, LPVF…ATGH, GGVI…HAAI, IYTG…MFYV, LLAL…NMMA, and VVGV…FLLL. Residues 451–480 are disordered; sequence SDEQKPPNGGGGEQSHGGGQRKAEEGSETV. The span at 458–470 shows a compositional bias: gly residues; that stretch reads NGGGGEQSHGGGQ. Serine 486 is modified (phosphoserine). 4 consecutive transmembrane segments (helical) span residues 609–629, 647–667, 675–695, and 704–724; these read GILI…SGCL, AIAA…MAVF, WWLL…SSAL, and LPVF…ATGH. An N-linked (GlcNAc...) asparagine glycan is attached at asparagine 742. 4 consecutive transmembrane segments (helical) span residues 773 to 793, 812 to 832, 841 to 861, and 863 to 883; these read GGIF…HAAI, IYFG…GGMF, LLAI…ANML, and VFGL…FLLL.

It belongs to the urea transporter family. In terms of assembly, interacts with SNAPIN which enhances its urea transport activity. As to expression, expressed in the inner medulla of the kidney. In terms of tissue distribution, expressed in both the inner and outer renal medulla of the kidney.

The protein resides in the apical cell membrane. The protein localises to the cell membrane. The catalysed reaction is urea(in) = urea(out). With respect to regulation, inhibited by phloretin. Activated by vasopressin, forskolin, 3-isobutyl-1-methylxanthine (IBMX) and cAMP. Its activity is regulated as follows. Inhibited by phloretin. Inhibited by urea analogs and phloretin and activated by forskolin. With respect to regulation, inhibited by phloretin and activated by forskolin. Its function is as follows. Mediates the transport of urea driven by a concentration gradient across the cell membrane of the kidney inner medullary collecting duct which is critical to the urinary concentrating mechanism. This chain is Urea transporter 2 (Slc14a2), found in Rattus norvegicus (Rat).